The following is a 493-amino-acid chain: Isoniazid-induced protein IniC (493 aa).

The polypeptide is Isoniazid-induced protein IniC (iniC) (Mycobacterium tuberculosis (strain CDC 1551 / Oshkosh)).